The chain runs to 300 residues: 4-hydroxy-tetrahydrodipicolinate synthase (300 aa).

Thr-46 provides a ligand contact to pyruvate. The active-site Proton donor/acceptor is the Tyr-134. The active-site Schiff-base intermediate with substrate is the Lys-162. Residue Val-204 coordinates pyruvate.

This sequence belongs to the DapA family. Homotetramer; dimer of dimers.

It is found in the cytoplasm. The catalysed reaction is L-aspartate 4-semialdehyde + pyruvate = (2S,4S)-4-hydroxy-2,3,4,5-tetrahydrodipicolinate + H2O + H(+). It participates in amino-acid biosynthesis; L-lysine biosynthesis via DAP pathway; (S)-tetrahydrodipicolinate from L-aspartate: step 3/4. In terms of biological role, catalyzes the condensation of (S)-aspartate-beta-semialdehyde [(S)-ASA] and pyruvate to 4-hydroxy-tetrahydrodipicolinate (HTPA). The chain is 4-hydroxy-tetrahydrodipicolinate synthase from Heliobacterium modesticaldum (strain ATCC 51547 / Ice1).